Consider the following 275-residue polypeptide: Formamidopyrimidine-DNA glycosylase (275 aa).

The active-site Schiff-base intermediate with DNA is the Pro2. Residue Glu3 is the Proton donor of the active site. The active-site Proton donor; for beta-elimination activity is Lys58. DNA contacts are provided by His91 and Arg110. The FPG-type zinc finger occupies 238–272 (QVYGQTGKPCPRCGQAIVKLKVGGRGTHICPKCQK). The active-site Proton donor; for delta-elimination activity is Arg262.

Belongs to the FPG family. Monomer. The cofactor is Zn(2+).

It catalyses the reaction Hydrolysis of DNA containing ring-opened 7-methylguanine residues, releasing 2,6-diamino-4-hydroxy-5-(N-methyl)formamidopyrimidine.. It carries out the reaction 2'-deoxyribonucleotide-(2'-deoxyribose 5'-phosphate)-2'-deoxyribonucleotide-DNA = a 3'-end 2'-deoxyribonucleotide-(2,3-dehydro-2,3-deoxyribose 5'-phosphate)-DNA + a 5'-end 5'-phospho-2'-deoxyribonucleoside-DNA + H(+). Involved in base excision repair of DNA damaged by oxidation or by mutagenic agents. Acts as a DNA glycosylase that recognizes and removes damaged bases. Has a preference for oxidized purines, such as 7,8-dihydro-8-oxoguanine (8-oxoG). Has AP (apurinic/apyrimidinic) lyase activity and introduces nicks in the DNA strand. Cleaves the DNA backbone by beta-delta elimination to generate a single-strand break at the site of the removed base with both 3'- and 5'-phosphates. The polypeptide is Formamidopyrimidine-DNA glycosylase (Streptococcus pyogenes serotype M28 (strain MGAS6180)).